The chain runs to 356 residues: MFSSVAHLARANPFNAPHLQLVHDVSGPRSPPGPPRRSRHLAAAAVEGYSCEFGSMKYYALCGFGGVLSCGLTHTAVVPLDLVKCRMQVDPQKYKGIFNGFSITLKEDGVRGLAKGWAPTLIGYSMQGLCKFGFYEVFKALYSNILGEENTYLWRTSLYLAASASAEFFADIALAPMEAAKVRIQTQPGYANTLREAVPKMYKEEGLNAFYKGVAPVWMRQIPYTMMKFACFERTVEALYKFVVPKPRSECTKAEQLVVTFVAGYIAGVFCAIVSHPADSVVSVLNKEKGSTASQVLQRLGFRGVWKGLFARIIMIGTLTALQWFIYDSVKVYFRLPRPPPPEMPESLKKKLGLTE.

The transit peptide at 1-44 (MFSSVAHLARANPFNAPHLQLVHDVSGPRSPPGPPRRSRHLAAA) directs the protein to the mitochondrion. At 45 to 57 (AVEGYSCEFGSMK) the chain is on the mitochondrial intermembrane side. Solcar repeat units lie at residues 57-141 (KYYA…FKAL), 154-238 (WRTS…TVEA), and 255-333 (EQLV…VKVY). The helical transmembrane segment at 58 to 80 (YYALCGFGGVLSCGLTHTAVVPL) threads the bilayer. Over 81–115 (DLVKCRMQVDPQKYKGIFNGFSITLKEDGVRGLAK) the chain is Mitochondrial matrix. An N6-acetyllysine modification is found at lysine 93. Lysine 106 is subject to N6-methyllysine. The chain crosses the membrane as a helical span at residues 116–135 (GWAPTLIGYSMQGLCKFGFY). At 136–155 (EVFKALYSNILGEENTYLWR) the chain is on the mitochondrial intermembrane side. Residues 156–177 (TSLYLAASASAEFFADIALAPM) form a helical membrane-spanning segment. At 178 to 212 (EAAKVRIQTQPGYANTLREAVPKMYKEEGLNAFYK) the chain is on the mitochondrial matrix side. The residue at position 190 (tyrosine 190) is a Phosphotyrosine. Lysine 203 bears the N6-acetyllysine mark. Residues 213-232 (GVAPVWMRQIPYTMMKFACF) traverse the membrane as a helical segment. Topologically, residues 233-255 (ERTVEALYKFVVPKPRSECTKAE) are mitochondrial intermembrane. A helical membrane pass occupies residues 256 to 278 (QLVVTFVAGYIAGVFCAIVSHPA). Over 279–308 (DSVVSVLNKEKGSTASQVLQRLGFRGVWKG) the chain is Mitochondrial matrix. A helical membrane pass occupies residues 309-327 (LFARIIMIGTLTALQWFIY). Residues 328–356 (DSVKVYFRLPRPPPPEMPESLKKKLGLTE) are Mitochondrial intermembrane-facing.

The protein belongs to the mitochondrial carrier (TC 2.A.29) family. In terms of assembly, interacts with PPIF; the interaction is impaired by CsA.

It localises to the mitochondrion inner membrane. It catalyses the reaction phosphate(in) + H(+)(in) = phosphate(out) + H(+)(out). Functionally, inorganic ion transporter that transports phosphate or copper ions across the mitochondrial inner membrane into the matrix compartment. Mediates proton-coupled symport of phosphate ions necessary for mitochondrial oxidative phosphorylation of ADP to ATP. Transports copper ions probably in the form of anionic copper(I) complexes to maintain mitochondrial matrix copper pool and to supply copper for cytochrome C oxidase complex assembly. May also play a role in regulation of the mitochondrial permeability transition pore (mPTP). The sequence is that of Solute carrier family 25 member 3 from Rattus norvegicus (Rat).